Here is an 88-residue protein sequence, read N- to C-terminus: UPF0297 protein BPUM_2379 (88 aa).

This sequence belongs to the UPF0297 family.

This chain is UPF0297 protein BPUM_2379, found in Bacillus pumilus (strain SAFR-032).